The primary structure comprises 479 residues: Ribosomal RNA small subunit methyltransferase F (479 aa).

Residues 125 to 131 (AAAPGSK), Glu149, Asp176, and Asp194 contribute to the S-adenosyl-L-methionine site. Catalysis depends on Cys247, which acts as the Nucleophile.

It belongs to the class I-like SAM-binding methyltransferase superfamily. RsmB/NOP family.

Its subcellular location is the cytoplasm. The catalysed reaction is cytidine(1407) in 16S rRNA + S-adenosyl-L-methionine = 5-methylcytidine(1407) in 16S rRNA + S-adenosyl-L-homocysteine + H(+). In terms of biological role, specifically methylates the cytosine at position 1407 (m5C1407) of 16S rRNA. This chain is Ribosomal RNA small subunit methyltransferase F, found in Escherichia coli O127:H6 (strain E2348/69 / EPEC).